An 889-amino-acid chain; its full sequence is Exocyst complex component 1 (889 aa).

2 positions are modified to phosphoserine: S145 and S148. Residues 156-269 (RAVQKTQHMD…GHVKETMEKI (114 aa)) are a coiled coil. S456 is modified (phosphoserine).

It belongs to the SEC3 family. The exocyst complex is composed of Sec3/Exoc1, Sec5/Exoc2, Sec6/Exoc3, Sec8/Exoc4, Sec10/Exoc5, Sec15/Exoc6, Exo70/Exoc7 and Exo84/Exoc8.

In terms of biological role, component of the exocyst complex involved in the docking of exocytic vesicles with fusion sites on the plasma membrane. The polypeptide is Exocyst complex component 1 (Drosophila melanogaster (Fruit fly)).